The chain runs to 731 residues: 1,4-alpha-glucan branching enzyme GlgB (731 aa).

The Nucleophile role is filled by Asp-412. The active-site Proton donor is Glu-465.

It belongs to the glycosyl hydrolase 13 family. GlgB subfamily. Monomer.

It catalyses the reaction Transfers a segment of a (1-&gt;4)-alpha-D-glucan chain to a primary hydroxy group in a similar glucan chain.. It participates in glycan biosynthesis; glycogen biosynthesis. Catalyzes the formation of the alpha-1,6-glucosidic linkages in glycogen by scission of a 1,4-alpha-linked oligosaccharide from growing alpha-1,4-glucan chains and the subsequent attachment of the oligosaccharide to the alpha-1,6 position. The chain is 1,4-alpha-glucan branching enzyme GlgB from Bordetella parapertussis (strain 12822 / ATCC BAA-587 / NCTC 13253).